A 317-amino-acid polypeptide reads, in one-letter code: Adenine deaminase (317 aa).

Residues His-14, His-16, and His-194 each coordinate Zn(2+). Catalysis depends on Glu-197, which acts as the Proton donor. Residue Asp-275 participates in Zn(2+) binding. Asp-276 is a substrate binding site.

This sequence belongs to the metallo-dependent hydrolases superfamily. Adenosine and AMP deaminases family. Adenine deaminase type 2 subfamily. Zn(2+) is required as a cofactor.

The catalysed reaction is adenine + H2O + H(+) = hypoxanthine + NH4(+). Its function is as follows. Catalyzes the hydrolytic deamination of adenine to hypoxanthine. Plays an important role in the purine salvage pathway and in nitrogen catabolism. This Bordetella bronchiseptica (strain ATCC BAA-588 / NCTC 13252 / RB50) (Alcaligenes bronchisepticus) protein is Adenine deaminase.